Reading from the N-terminus, the 290-residue chain is UBX domain-containing protein 1-B (290 aa).

In terms of domain architecture, UBA spans 1-42 (MADCSALESLIEMGFSPSRAEKALSATGNQGIEPAMDWLVEH). Positions 49–210 (KEPSVVIPED…VQEPPTKKEY (162 aa)) are disordered. 2 stretches are compositionally biased toward basic and acidic residues: residues 80-117 (PLTEEEKEKQTKRMMELIAQKQKEREEREKRERIEQEK) and 132-172 (RMQE…DRAR). The stretch at 81–171 (LTEEEKEKQT…KIARDKADRA (91 aa)) forms a coiled coil. Low complexity predominate over residues 185–201 (PAETSVPATAPSPSSPV). The region spanning 208–287 (KEYDQCRIQV…GLVPTAVLIV (80 aa)) is the UBX domain.

The protein resides in the cytoplasm. Functionally, component of a complex required to couple deglycosylation and proteasome-mediated degradation of misfolded proteins in the endoplasmic reticulum that are retrotranslocated in the cytosol. Involved in ubiquitin-proteasome systems. The chain is UBX domain-containing protein 1-B (ubxn1-b) from Xenopus laevis (African clawed frog).